The primary structure comprises 653 residues: ATP-dependent zinc metalloprotease FtsH 1 (653 aa).

The Cytoplasmic segment spans residues 1–8 (MAENKWLR). Residues 9 to 29 (NGFVWIVLIIAVVALWVTFMK) traverse the membrane as a helical segment. The Extracellular portion of the chain corresponds to 30 to 110 (DGGSAREENF…RVNPASQWGN (81 aa)). The chain crosses the membrane as a helical span at residues 111-131 (WLSALTFILPTLFLIGIVIFM). Residues 132-653 (MRQAQGTNNQ…SPTMRPQPAS (522 aa)) are Cytoplasmic-facing. ATP is bound at residue 203–210 (GPPGTGKT). Residue histidine 425 participates in Zn(2+) binding. Residue glutamate 426 is part of the active site. 2 residues coordinate Zn(2+): histidine 429 and aspartate 501. The segment at 604–653 (EPRPRPQLVGPPVTRPAALAHKTEEADRGGERSPHPQPHPSPTMRPQPAS) is disordered. The segment covering 624–637 (HKTEEADRGGERSP) has biased composition (basic and acidic residues). Residues 638-653 (HPQPHPSPTMRPQPAS) are compositionally biased toward pro residues.

In the central section; belongs to the AAA ATPase family. It in the C-terminal section; belongs to the peptidase M41 family. In terms of assembly, homohexamer. The cofactor is Zn(2+).

It localises to the cell membrane. Its function is as follows. Acts as a processive, ATP-dependent zinc metallopeptidase for both cytoplasmic and membrane proteins. Plays a role in the quality control of integral membrane proteins. This Sphaerobacter thermophilus (strain ATCC 49802 / DSM 20745 / KCCM 41009 / NCIMB 13125 / S 6022) protein is ATP-dependent zinc metalloprotease FtsH 1.